Reading from the N-terminus, the 61-residue chain is UPF0434 protein PST_2635 (61 aa).

Belongs to the UPF0434 family.

The polypeptide is UPF0434 protein PST_2635 (Stutzerimonas stutzeri (strain A1501) (Pseudomonas stutzeri)).